The sequence spans 690 residues: Cysteine-rich receptor-like protein kinase 21 (690 aa).

The first 24 residues, 1–24, serve as a signal peptide directing secretion; that stretch reads MQKNKMVDLRAIFWFVVISSCAVA. The 105-residue stretch at 25–129 folds into the Gnk2-homologous 1 domain; the sequence is APTCIQRSDF…CLVRYSNHLI (105 aa). Topologically, residues 25-281 are extracellular; the sequence is APTCIQRSDF…KDGKNISTGS (257 aa). Residues Asn130, Asn148, Asn155, Asn220, Asn268, and Asn276 are each glycosylated (N-linked (GlcNAc...) asparagine). In terms of domain architecture, Gnk2-homologous 2 spans 140 to 246; sequence AEYIEYKYNT…CFMRWDLQPF (107 aa). Residues 282–302 form a helical membrane-spanning segment; sequence IVAIAVVSVVVSTVLLALGYA. Residues 303–690 are Cytoplasmic-facing; it reads VSRRRKAYQS…DASITSVRPR (388 aa). The Protein kinase domain maps to 363-640; that stretch reads FHKSNKLGHG…IFRMLTNVSI (278 aa). ATP contacts are provided by residues 369 to 377 and Lys391; that span reads LGHGGFGAV. A Phosphotyrosine modification is found at Tyr436. Residue Asp488 is the Proton acceptor of the active site. Ser492 is subject to Phosphoserine. Residue Thr528 is modified to Phosphothreonine. Residue Tyr536 is modified to Phosphotyrosine.

It belongs to the protein kinase superfamily. Ser/Thr protein kinase family. CRK subfamily.

Its subcellular location is the membrane. The catalysed reaction is L-seryl-[protein] + ATP = O-phospho-L-seryl-[protein] + ADP + H(+). The enzyme catalyses L-threonyl-[protein] + ATP = O-phospho-L-threonyl-[protein] + ADP + H(+). The sequence is that of Cysteine-rich receptor-like protein kinase 21 (CRK21) from Arabidopsis thaliana (Mouse-ear cress).